The sequence spans 186 residues: NADH-quinone oxidoreductase subunit B (186 aa).

Residues Cys-44, Cys-45, Cys-110, and Cys-139 each coordinate [4Fe-4S] cluster.

It belongs to the complex I 20 kDa subunit family. In terms of assembly, NDH-1 is composed of 14 different subunits. Subunits NuoB, C, D, E, F, and G constitute the peripheral sector of the complex. The cofactor is [4Fe-4S] cluster.

The protein localises to the cell inner membrane. It catalyses the reaction a quinone + NADH + 5 H(+)(in) = a quinol + NAD(+) + 4 H(+)(out). Functionally, NDH-1 shuttles electrons from NADH, via FMN and iron-sulfur (Fe-S) centers, to quinones in the respiratory chain. The immediate electron acceptor for the enzyme in this species is believed to be ubiquinone. Couples the redox reaction to proton translocation (for every two electrons transferred, four hydrogen ions are translocated across the cytoplasmic membrane), and thus conserves the redox energy in a proton gradient. In Leptospira borgpetersenii serovar Hardjo-bovis (strain JB197), this protein is NADH-quinone oxidoreductase subunit B.